Here is a 337-residue protein sequence, read N- to C-terminus: Fructose-1,6-bisphosphatase class 1 (337 aa).

4 residues coordinate Mg(2+): E89, D112, L114, and D115. Residues 115-118 (DGSS), N208, Y241, and K271 contribute to the substrate site. E277 is a binding site for Mg(2+).

It belongs to the FBPase class 1 family. In terms of assembly, homotetramer. It depends on Mg(2+) as a cofactor.

The protein resides in the cytoplasm. It carries out the reaction beta-D-fructose 1,6-bisphosphate + H2O = beta-D-fructose 6-phosphate + phosphate. The protein operates within carbohydrate biosynthesis; gluconeogenesis. The sequence is that of Fructose-1,6-bisphosphatase class 1 from Yersinia pestis bv. Antiqua (strain Antiqua).